The following is a 541-amino-acid chain: Centrosomal protein of 63 kDa (541 aa).

Position 1 is an N-acetylmethionine (Met1). 2 coiled-coil regions span residues Glu22 to Glu199 and Met242 to Ala305. Position 278 is a phosphoserine (Ser278). Residues Gln294–Gln324 form a disordered region. The span at Glu307–Tyr321 shows a compositional bias: basic and acidic residues. Coiled coils occupy residues Leu346 to Leu485 and His514 to Lys541.

It belongs to the CEP63 family. Interacts with CEP152 and CDK1; these interactions recruit both ligands to centrosomes. Interacts with CDK2, CDK5RAP2, WDR62, CEP90, KIAA0753/moonraker and CCDC14. CEP63, CDK5RAP2, CEP152, WDR62 are proposed to form a stepwise assembled complex at the centrosome forming a ring near parental centrioles. Interacts with CCDC57; the interaction is required for their location to proximal end of centrioles. Interacts with FXR1; promoting its stabilization. Post-translationally, polyubiquitinated via 'Lys-48'-linked ubiquitin, leading to its degradation. Deubiquitinated by USP36, promoting its stabilization.

The protein localises to the cytoplasm. Its subcellular location is the cytoskeleton. The protein resides in the microtubule organizing center. It is found in the centrosome. It localises to the centriole. The protein localises to the centriolar satellite. Required for normal spindle assembly. Plays a key role in mother-centriole-dependent centriole duplication; the function seems also to involve CEP152, CDK5RAP2 and WDR62 through a stepwise assembled complex at the centrosome that recruits CDK2 required for centriole duplication. Reported to be required for centrosomal recruitment of CEP152; however, this function has been questioned. Also recruits CDK1 to centrosomes. Plays a role in DNA damage response. Following DNA damage, such as double-strand breaks (DSBs), is removed from centrosomes; this leads to the inactivation of spindle assembly and delay in mitotic progression. Promotes stabilization of FXR1 protein by inhibiting FXR1 ubiquitination. The sequence is that of Centrosomal protein of 63 kDa (CEP63) from Pongo abelii (Sumatran orangutan).